A 202-amino-acid chain; its full sequence is MKLLVATTNEGKYREIKEILSEYGIEVLKPEEKLEVEETGCTFLENAYLKARAYYERYKIPALADDSGLIVEAISPYPGVYSSRFYDIDFGGREEVRTNKDEANIRKLLRLLENTENRKAKFVAFIVVYGGSWGIFAEGEVRGEITKEPRGDRGFGYDPVFVPEGYNKTMAELSPEEKNKISHRGRALRKLVHVLKNCEKAF.

7-12 (TTNEGK) is a substrate binding site. 2 residues coordinate Mg(2+): Glu-37 and Asp-66. Asp-66 serves as the catalytic Proton acceptor. Substrate is bound by residues Ser-67, 155–158 (FGYD), Lys-178, and 183–184 (HR).

The protein belongs to the HAM1 NTPase family. Homodimer. Mg(2+) is required as a cofactor.

The catalysed reaction is XTP + H2O = XMP + diphosphate + H(+). It catalyses the reaction dITP + H2O = dIMP + diphosphate + H(+). The enzyme catalyses ITP + H2O = IMP + diphosphate + H(+). Pyrophosphatase that catalyzes the hydrolysis of nucleoside triphosphates to their monophosphate derivatives, with a high preference for the non-canonical purine nucleotides XTP (xanthosine triphosphate), dITP (deoxyinosine triphosphate) and ITP. Seems to function as a house-cleaning enzyme that removes non-canonical purine nucleotides from the nucleotide pool, thus preventing their incorporation into DNA/RNA and avoiding chromosomal lesions. The polypeptide is dITP/XTP pyrophosphatase (Aquifex aeolicus (strain VF5)).